The primary structure comprises 318 residues: Methionine import ATP-binding protein MetN (318 aa).

One can recognise an ABC transporter domain in the interval 2-237 (IEIKDVGKIF…PEGELKKIIE (236 aa)). 34–41 (GRSGAGKS) contributes to the ATP binding site.

This sequence belongs to the ABC transporter superfamily. Methionine importer (TC 3.A.1.24) family. In terms of assembly, the complex is composed of two ATP-binding proteins (MetN), two transmembrane proteins (MetI) and a solute-binding protein (MetQ).

It is found in the cell membrane. It carries out the reaction L-methionine(out) + ATP + H2O = L-methionine(in) + ADP + phosphate + H(+). It catalyses the reaction D-methionine(out) + ATP + H2O = D-methionine(in) + ADP + phosphate + H(+). Its function is as follows. Part of the ABC transporter complex MetNIQ involved in methionine import. Responsible for energy coupling to the transport system. The sequence is that of Methionine import ATP-binding protein MetN from Clostridium tetani (strain Massachusetts / E88).